We begin with the raw amino-acid sequence, 333 residues long: Phenylalanine--tRNA ligase alpha subunit (333 aa).

Glu258 provides a ligand contact to Mg(2+).

The protein belongs to the class-II aminoacyl-tRNA synthetase family. Phe-tRNA synthetase alpha subunit type 1 subfamily. In terms of assembly, tetramer of two alpha and two beta subunits. It depends on Mg(2+) as a cofactor.

The protein localises to the cytoplasm. The enzyme catalyses tRNA(Phe) + L-phenylalanine + ATP = L-phenylalanyl-tRNA(Phe) + AMP + diphosphate + H(+). The polypeptide is Phenylalanine--tRNA ligase alpha subunit (Wigglesworthia glossinidia brevipalpis).